The chain runs to 58 residues: Putative transcript Y 13 protein (58 aa).

The chain crosses the membrane as a helical span at residues 17–37 (LLGWDLNLSLFLGLCLMLLLA).

The protein localises to the membrane. The sequence is that of Putative transcript Y 13 protein (TTTY13) from Homo sapiens (Human).